Here is a 97-residue protein sequence, read N- to C-terminus: Sperm protein associated with the nucleus on the X chromosome A (97 aa).

Residues 1–49 are disordered; the sequence is MDKQSSAGGVKRSVPCDSNEANEMMPETPTGDSDPQPAPKKMKTSESST. The Nuclear localization signal motif lies at 37–45; sequence PAPKKMKTS.

The protein belongs to the SPAN-X family. As to expression, detected in testis and sperm.

The protein localises to the cytoplasm. Its subcellular location is the nucleus. The chain is Sperm protein associated with the nucleus on the X chromosome A from Homo sapiens (Human).